Consider the following 769-residue polypeptide: CO(2)-response secreted protease (769 aa).

A signal peptide spans 1-27 (MKGITFFTPFLSFLYLLCILFMTETEA). The 74-residue stretch at 35–108 (VYIVYMGSAS…VFPDPHFQLH (74 aa)) folds into the Inhibitor I9 domain. Residues 112 to 613 (SWDFLKYQTS…AGELSSTASM (502 aa)) form the Peptidase S8 domain. Residues Asp145 and His210 each act as charge relay system in the active site. Positions 381–465 (ADASEGSARA…SKEAAEIFSY (85 aa)) constitute a PA domain. Ser546 functions as the Charge relay system in the catalytic mechanism.

The protein belongs to the peptidase S8 family. As to expression, expressed in roots, guard cells and meristemoid and pavement cells.

Its subcellular location is the secreted. The protein resides in the cell wall. It carries out the reaction Release of an N-terminal tripeptide from a polypeptide.. Its function is as follows. Mediates CO(2)-controlled stomatal development by cleaving peptide EPF2 (AC Q8LC53). Not active on peptides EPF1 (AC Q8S8I4) or stomagen (AC Q9SV72). This is CO(2)-response secreted protease from Arabidopsis thaliana (Mouse-ear cress).